The following is a 118-amino-acid chain: Protein Rev (118 aa).

Phosphoserine; by host CK2 occurs at positions 5 and 8. The tract at residues 18–26 (LIKFLYQSN) is homomultimerization. The segment at 23–46 (YQSNPPPSPEGTRQARRNRRRRWR) is disordered. Residues 34–50 (TRQARRNRRRRWRARQR) carry the Nuclear localization signal and RNA-binding (RRE) motif. The span at 36 to 46 (QARRNRRRRWR) shows a compositional bias: basic residues. Residues 73–84 (LQLPPLERLNLN) carry the Nuclear export signal and binding to XPO1 motif. The tract at residues 87–118 (EDCRTSGTQGVGHPQISVESPTVLESGTEEQC) is disordered. The residue at position 92 (Ser-92) is a Phosphoserine; by host. Positions 103–112 (SVESPTVLES) are enriched in polar residues.

It belongs to the HIV-1 REV protein family. Homomultimer; when bound to the RRE. Multimeric assembly is essential for activity and may involve XPO1. Binds to human KPNB1, XPO1, TNPO1, RANBP5 and IPO7. Interacts with the viral Integrase. Interacts with human KHDRBS1. Interacts with human NAP1; this interaction decreases Rev multimerization and stimulates its activity. Interacts with human DEAD-box helicases DDX3 and DDX24; these interactions may serve for viral RNA export to the cytoplasm and packaging, respectively. Interacts with human PSIP1; this interaction may inhibit HIV-1 DNA integration by promoting dissociation of the Integrase-LEDGF/p75 complex. Post-translationally, asymmetrically arginine dimethylated at one site by host PRMT6. Methylation impairs the RNA-binding activity and export of viral RNA from the nucleus to the cytoplasm. In terms of processing, phosphorylated by protein kinase CK2. Presence of, and maybe binding to the N-terminus of the regulatory beta subunit of CK2 is necessary for CK2-mediated Rev's phosphorylation.

The protein localises to the host nucleus. Its subcellular location is the host nucleolus. The protein resides in the host cytoplasm. Functionally, escorts unspliced or incompletely spliced viral pre-mRNAs (late transcripts) out of the nucleus of infected cells. These pre-mRNAs carry a recognition sequence called Rev responsive element (RRE) located in the env gene, that is not present in fully spliced viral mRNAs (early transcripts). This function is essential since most viral proteins are translated from unspliced or partially spliced pre-mRNAs which cannot exit the nucleus by the pathway used by fully processed cellular mRNAs. Rev itself is translated from a fully spliced mRNA that readily exits the nucleus. Rev's nuclear localization signal (NLS) binds directly to KPNB1/Importin beta-1 without previous binding to KPNA1/Importin alpha-1. KPNB1 binds to the GDP bound form of RAN (Ran-GDP) and targets Rev to the nucleus. In the nucleus, the conversion from Ran-GDP to Ran-GTP dissociates Rev from KPNB1 and allows Rev's binding to the RRE in viral pre-mRNAs. Rev multimerization on the RRE via cooperative assembly exposes its nuclear export signal (NES) to the surface. Rev can then form a complex with XPO1/CRM1 and Ran-GTP, leading to nuclear export of the complex. Conversion from Ran-GTP to Ran-GDP mediates dissociation of the Rev/RRE/XPO1/RAN complex, so that Rev can return to the nucleus for a subsequent round of export. Beside KPNB1, also seems to interact with TNPO1/Transportin-1, RANBP5/IPO5 and IPO7/RANBP7 for nuclear import. The nucleoporin-like HRB/RIP is an essential cofactor that probably indirectly interacts with Rev to release HIV RNAs from the perinuclear region to the cytoplasm. The protein is Protein Rev of Human immunodeficiency virus type 1 group M subtype D (isolate ELI) (HIV-1).